The sequence spans 255 residues: Small ribosomal subunit protein uS2 (255 aa).

The segment at 232 to 255 (ASGRDLGASEEVPVEPALEEASEA) is disordered.

This sequence belongs to the universal ribosomal protein uS2 family.

The sequence is that of Small ribosomal subunit protein uS2 from Sinorhizobium medicae (strain WSM419) (Ensifer medicae).